Reading from the N-terminus, the 706-residue chain is MKHIPLTTLCVAISAVLLTACGGSGGSNPPAPTPIPNASGSGNTGNTGNAGGTDNTANAGNTGGASSGTGSANTPEPKYQDVPTDKNEKEQVSPIQEPAMGYGMALSKINLHNRQDTPLDEKNIITLDGKKQVAEGKKSPLPFSLDVENKLLDGYIAKMDKADKNAIRRRIESENKAKPLSEAELAEKIKEAVRKSYEFQQVMTSLENKIFHSNDGTTKATTRDLQYVDYGYYLANDANYLTVKTDKPKLWNSGPVGGVFYNGSTTAKELPTQDAVKYKGHWDFMTDVANKGNRFSEVKGTRQAGWWYGASSKDEYNRLLTDEKNKPDGYNGEYGHSSEFTVNFKEKKLTGGLFSNLQDSHKQKVTKTKRYDIDANIHGNRFRGSAIASDKEKDSETKHPFTSDAKDRLEGGFYGPKGEELAGKFLTDDNKLFGVFGAKQESKADKTEAILDAYALGAFNKNDANTFTPFTKKQLDNFGNAKKLVLGSTVINLVSTDATKNEFTEDKPKSATNKAGETLMVNDKVSVKTYGYGRNFEYLKFGELSVGGSHSVFLQGERTATTGDKAVPTEGKAKYLGNWVGYITGTGTGKSFNEAQDIADFDIDFKNKTVNGKLTTKGRTDPVFNITGEISGNGWTGKASTAKADAGGYNIDSNGTNKSIVIRDADVTGGFYGPNATEMGGSFTHNTNDSKASVVFGTKRQEEVKP.

Residues 1-20 (MKHIPLTTLCVAISAVLLTA) form the signal peptide. Cys-21 carries N-palmitoyl cysteine lipidation. Residue Cys-21 is the site of S-diacylglycerol cysteine attachment. Disordered stretches follow at residues 26 to 92 (GSNP…KEQV) and 384 to 412 (GSAI…LEGG). Gly residues predominate over residues 42-51 (GNTGNTGNAG). Over residues 389–410 (SDKEKDSETKHPFTSDAKDRLE) the composition is skewed to basic and acidic residues.

It belongs to the TbpB family.

It is found in the cell outer membrane. It localises to the cell surface. Its function is as follows. Moraxella acquires iron by extracting it from serum transferrin (TF) in its human host. Acts as a transferrin receptor and is required for transferrin utilization. The chain is Transferrin-binding protein B from Moraxella catarrhalis (Branhamella catarrhalis).